The chain runs to 142 residues: Large ribosomal subunit protein uL16 (142 aa).

The protein belongs to the universal ribosomal protein uL16 family. As to quaternary structure, part of the 50S ribosomal subunit.

In terms of biological role, binds 23S rRNA and is also seen to make contacts with the A and possibly P site tRNAs. This chain is Large ribosomal subunit protein uL16, found in Trichormus variabilis (strain ATCC 29413 / PCC 7937) (Anabaena variabilis).